Reading from the N-terminus, the 78-residue chain is Large ribosomal subunit protein bL28 (78 aa).

Residues 1–30 (MAAHCQVTGAGPGFGHSISHSHRRTKRRFD) form a disordered region.

It belongs to the bacterial ribosomal protein bL28 family.

In Micrococcus luteus (strain ATCC 4698 / DSM 20030 / JCM 1464 / CCM 169 / CCUG 5858 / IAM 1056 / NBRC 3333 / NCIMB 9278 / NCTC 2665 / VKM Ac-2230) (Micrococcus lysodeikticus), this protein is Large ribosomal subunit protein bL28.